Reading from the N-terminus, the 626-residue chain is Glyco-Gag protein (626 aa).

The Cytoplasmic segment spans residues 1 to 66 (LGDVPGTSGA…SVWNRSRAAR (66 aa)). A helical membrane pass occupies residues 67–86 (LVCCSIVLCCLCLTVFLYLS). Topologically, residues 87–626 (ENMGQAVTTP…PQASLLTLDD (540 aa)) are extracellular. Residue Asn-113 is glycosylated (N-linked (GlcNAc...) asparagine; by host). 2 stretches are compositionally biased toward pro residues: residues 198–212 (PPSA…PLST) and 249–261 (DPPP…PPSP). Disordered stretches follow at residues 198–306 (PPSA…FPLR) and 522–626 (RETP…TLDD). 2 stretches are compositionally biased toward basic and acidic residues: residues 522–554 (RETP…EKER) and 574–607 (RQDR…DCPK). A coiled-coil region spans residues 526–566 (EEREERIRRETEEKEERRRAEDVQREKERDRRRHREMSKLL). A CCHC-type zinc finger spans residues 590-607 (DQCAYCKEKGHWARDCPK).

In terms of processing, glycosylated by host. Cleaved by host near the middle of the molecule, releasing the c-terminal half containing capsid and nucleoprotein domains op GAG.

It is found in the host cell membrane. In terms of biological role, plays a role in viral particle release. Presumably acts by facilitating the fission of the virion bud at the cell surface. May prevent the antiviral activity of murine APOBEC3. This chain is Glyco-Gag protein, found in Mus musculus (Mouse).